The sequence spans 1002 residues: MDTRDDVTLAKVPAPVAVYCGSVPRTSVGLRAPPPGGIDSSLLAHDEASLQPVSSVLPSSEKPSQLSREHEDQSSLMLNAPLKGWQARNGYPRGLGVLPLGHHLGAAIPSLESEASSVARDTIQIKDKLKKRRLSEGMAASSQASLDPVGGPRGVPLRSTIPRTTSQRLLRVPRPMPPIQSIPTTPEANSAKEKDLDPPGGRQDLQDPGASAQEVQISRQYLHCADEKMHKSLGGLVIPPIPKARMPTGTSSCRPGSLPSPLCPSQDVLMGPKAPHTRLTCENGPLEKTPKSPASKPLVPVVKAKSAEAPETSLASSQSTFTLTAFSSHAKETRSLENEEDQKESSTKVQVTISKSAQEKMRLKQMKEMELLRRAKEPEWERELVSQGLGTRRTSAKEGLLPLRGSGALSEPAGMSSPRRNNMGALQRKRANRASLPSIPVSKQEPGFARHASANSLPAVLTLGSPEWEEEEEEMDLRALRELRPFSNPELGLTDALQCLNSNDWQMKEKGLVNIQRLAACHSEVLGTRLHDVSLAVTAEVTNLRSKVSRLAISTLGDLFRVLKKNMDQEAEEIVRCLLQKMGNTSEFIQRAANRALGAMVENVTPARALVALTSAGVYHRNPLVRKCTAKHLSAVLEQIGAEKLLSGSRDNTDMLVHNLVRLAQDSNQDTRFYGRKMVNILMANAKFDAFLKQSLPSHDLRKVMAAIKQRGIQDNHELQSAKGRKVSKSLVVCENGLPSHEGVETSEQLRELTRLLEAKEFQARMEGVGKLLEYCKAKPELVAANLVQVFDVFTPRLHDSNKKVNQWALESLAQMLPILKESIHPMLLSLIIAAADNLNSKNSGISTAASTVLDAMMGSLDHLCLLQAFAGRVRFLTGPAVLDITDRLSVLVASVYPRKPQAVERHILPVLWYFLNKMSGNGVLPGRGGNVRTAVCRLARSLQEQMGSRLQDFAASQPQQVLKALQGLLASESLGANDKVIGGRMAPDIQMTGTTCPQQLD.

5 disordered regions span residues 54–74 (SSVL…EDQS), 131–214 (KRRL…SAQE), 332–351 (ETRS…KVQV), 402–421 (PLRG…PRRN), and 426–450 (LQRK…GFAR).

Belongs to the Crescerin family.

This is TOG array regulator of axonemal microtubules protein 2 (Togaram2) from Mus musculus (Mouse).